A 1231-amino-acid chain; its full sequence is Cohesin subunit SA-2 (1231 aa).

Position 1 is an N-acetylmethionine (Met1). Positions 1 to 75 (MIAAPEIPTD…GPNRMNGHHQ (75 aa)) are disordered. Basic residues predominate over residues 36–48 (KQGKGKTCKKGKK). The 86-residue stretch at 293-378 (FVHRYRDAIA…SRFKDRIVSM (86 aa)) folds into the SCD domain. An N6-acetyllysine modification is found at Lys607. Phosphoserine is present on residues Ser1058, Ser1061, Ser1064, and Ser1065. The segment at 1064 to 1083 (SSRGSTVRSKKSKPSTGKRK) is disordered. A compositionally biased stretch (basic residues) spans 1071–1082 (RSKKSKPSTGKR). Thr1112 is modified (phosphothreonine). Ser1177 and Ser1178 each carry phosphoserine.

It belongs to the SCC3 family. Interacts directly with RAD21 in cohesin complex. Cohesin complexes are composed of a heterodimer between a SMC1 protein (SMC1A or SMC1B) and SMC3, which are attached via their hinge domain, and RAD21 which link them at their heads, and one STAG protein (STAG1, STAG2 or STAG3). In cohesin complexes, STAG2 is mutually exclusive with STAG1 and STAG3. Post-translationally, phosphorylated by PLK1. The large dissociation of cohesin from chromosome arms during prophase is partly due to its phosphorylation.

It localises to the nucleus. The protein resides in the chromosome. Its subcellular location is the centromere. Component of cohesin complex, a complex required for the cohesion of sister chromatids after DNA replication. The cohesin complex apparently forms a large proteinaceous ring within which sister chromatids can be trapped. At anaphase, the complex is cleaved and dissociates from chromatin, allowing sister chromatids to segregate. The cohesin complex may also play a role in spindle pole assembly during mitosis. The sequence is that of Cohesin subunit SA-2 (STAG2) from Homo sapiens (Human).